The chain runs to 540 residues: MLO protein homolog 1 (540 aa).

Topologically, residues 1–16 (MAGGRSGSRELPETPT) are extracellular. Residues 17–37 (WAVAVVCAVLVLVSAAMEHGL) traverse the membrane as a helical segment. Topologically, residues 38 to 60 (HNLSHWFRRRQKKAMGDALDKIK) are cytoplasmic. Residues 61–81 (AELMLLGFISLLLTVAQAPIS) traverse the membrane as a helical segment. Over 82–142 (KICIPKSAAN…MSAKSMHQLH (61 aa)) the chain is Extracellular. The chain crosses the membrane as a helical span at residues 143-163 (IFIFVLAVFHVTYCIITMGLG). Residues 164 to 265 (RLKMKKWKKW…IKRSLEDDFK (102 aa)) lie on the Cytoplasmic side of the membrane. Residues 266–286 (VVVGISLPLWFVGILVLFLDI) form a helical membrane-spanning segment. A topological domain (extracellular) is located at residue histidine 287. Residues 288 to 308 (GLGTLIWISFVPLIIVLLVGT) form a helical membrane-spanning segment. The Cytoplasmic portion of the chain corresponds to 309 to 347 (KLEMVIMEMAQEIQDRATVIQGAPMVEPSNKYFWFNRPD). Residues 348–368 (WVLFFIHLTLFHNAFQMAHFV) traverse the membrane as a helical segment. The Extracellular segment spans residues 369–383 (WTMATPGLKKCFHEN). A helical transmembrane segment spans residues 384–404 (IWLSIVEVIVGISLQVLCSYI). Topologically, residues 405–540 (TFPLYALVTQ…DSDFSFSAQR (136 aa)) are cytoplasmic. The calmodulin-binding stretch occupies residues 426–447 (EQTMKALMNWRKKAMEKKKVRD). A disordered region spans residues 468–526 (ASPVHLLQDHRARSDDPPSPITVASPPAPEEDMYPVPAAAASRQLLDDPPDRRWMASSS). Basic and acidic residues-rich tracts occupy residues 474–483 (LQDHRARSDD) and 512–521 (LLDDPPDRRW).

This sequence belongs to the MLO family.

The protein localises to the membrane. Functionally, may be involved in modulation of pathogen defense and leaf cell death. Activity seems to be regulated by Ca(2+)-dependent calmodulin binding and seems not to require heterotrimeric G proteins. This chain is MLO protein homolog 1 (MLO1), found in Oryza sativa subsp. indica (Rice).